The following is a 532-amino-acid chain: Di/tripeptide-binding protein 2 (532 aa).

The signal sequence occupies residues 1-24 (MRPRSALRYSLLLLAFAASAAIQA).

It belongs to the bacterial solute-binding protein 5 family. As to quaternary structure, the complex is composed of two ATP-binding proteins (DppD and DppF), two transmembrane proteins (DppB and DppC) and a solute-binding protein (DppA2). Five orthologous SBPs (DppA1-A5) are present in P.aeruginosa, which increases the substrate specificity of the DppBCDF transporter.

Functionally, part of the ABC transporter DppABCDF involved in the uptake of various di/tripeptides. Shows high flexibility on substrate recognition. Efficiently uses tripeptides. This Pseudomonas aeruginosa (strain UCBPP-PA14) protein is Di/tripeptide-binding protein 2.